The sequence spans 139 residues: Acidic phospholipase A2 4 (139 aa).

A signal peptide spans 1-16 (MRTLWIVAVWLVGVEG). 7 disulfides stabilise this stretch: Cys42–Cys131, Cys44–Cys60, Cys59–Cys111, Cys65–Cys139, Cys66–Cys104, Cys73–Cys97, and Cys91–Cys102. Tyr43, Gly45, and Gly47 together coordinate Ca(2+). Residue His63 is part of the active site. Asp64 contributes to the Ca(2+) binding site. Asp105 is a catalytic residue.

Belongs to the phospholipase A2 family. Group II subfamily. D49 sub-subfamily. Requires Ca(2+) as cofactor. Expressed by the venom gland.

The protein resides in the secreted. It carries out the reaction a 1,2-diacyl-sn-glycero-3-phosphocholine + H2O = a 1-acyl-sn-glycero-3-phosphocholine + a fatty acid + H(+). In terms of biological role, PLA2 catalyzes the calcium-dependent hydrolysis of the 2-acyl groups in 3-sn-phosphoglycerides. The sequence is that of Acidic phospholipase A2 4 from Echis carinatus sochureki (Saw-scaled viper).